A 457-amino-acid polypeptide reads, in one-letter code: Methanethiol oxidase (457 aa).

The protein belongs to the selenium-binding protein family.

Its subcellular location is the nucleus. It is found in the cytoplasm. The protein resides in the cytosol. It localises to the membrane. The catalysed reaction is methanethiol + O2 + H2O = hydrogen sulfide + formaldehyde + H2O2 + H(+). It functions in the pathway organosulfur degradation. Its function is as follows. Catalyzes the oxidation of methanethiol, an organosulfur compound known to be produced in substantial amounts by gut bacteria. Selenium-binding protein which may be involved in the sensing of reactive xenobiotics in the cytoplasm. May be involved in intra-Golgi protein transport. This is Methanethiol oxidase (selenbp1) from Danio rerio (Zebrafish).